A 156-amino-acid chain; its full sequence is Regulatory protein RecX (156 aa).

It belongs to the RecX family.

It localises to the cytoplasm. Its function is as follows. Modulates RecA activity. The chain is Regulatory protein RecX from Pseudomonas putida (strain GB-1).